A 249-amino-acid chain; its full sequence is Hydroxyacylglutathione hydrolase (249 aa).

Zn(2+)-binding residues include histidine 53, histidine 55, aspartate 57, histidine 58, histidine 110, aspartate 127, and histidine 165.

The protein belongs to the metallo-beta-lactamase superfamily. Glyoxalase II family. Monomer. Zn(2+) is required as a cofactor.

It carries out the reaction an S-(2-hydroxyacyl)glutathione + H2O = a 2-hydroxy carboxylate + glutathione + H(+). It participates in secondary metabolite metabolism; methylglyoxal degradation; (R)-lactate from methylglyoxal: step 2/2. Thiolesterase that catalyzes the hydrolysis of S-D-lactoyl-glutathione to form glutathione and D-lactic acid. This Buchnera aphidicola subsp. Baizongia pistaciae (strain Bp) protein is Hydroxyacylglutathione hydrolase.